Here is a 538-residue protein sequence, read N- to C-terminus: Phosphoenolpyruvate carboxykinase (ATP) (538 aa).

Substrate contacts are provided by R64, Y206, and K212. Residues K212, H231, and 247–255 (GLSGTGKTT) contribute to the ATP site. Positions 212 and 231 each coordinate Mn(2+). Residue D268 coordinates Mn(2+). ATP-binding positions include E296, R332, 448–449 (RI), and T454. R332 provides a ligand contact to substrate.

This sequence belongs to the phosphoenolpyruvate carboxykinase (ATP) family. In terms of assembly, monomer. Mn(2+) serves as cofactor.

The protein resides in the cytoplasm. The catalysed reaction is oxaloacetate + ATP = phosphoenolpyruvate + ADP + CO2. It functions in the pathway carbohydrate biosynthesis; gluconeogenesis. Its function is as follows. Involved in the gluconeogenesis. Catalyzes the conversion of oxaloacetate (OAA) to phosphoenolpyruvate (PEP) through direct phosphoryl transfer between the nucleoside triphosphate and OAA. In Enterobacter sp. (strain 638), this protein is Phosphoenolpyruvate carboxykinase (ATP).